The chain runs to 113 residues: Small ribosomal subunit protein eS24 (113 aa).

Belongs to the eukaryotic ribosomal protein eS24 family.

The sequence is that of Small ribosomal subunit protein eS24 from Metallosphaera sedula (strain ATCC 51363 / DSM 5348 / JCM 9185 / NBRC 15509 / TH2).